The following is a 300-amino-acid chain: MTAPLGFAVIDKPAGLTSHACVARIRRLLGIRRVGHGGTLDPAVTGVLPIAVGQATRLLPYLPGDKTYRGVIQLGITTNTDDLEGEISSRQPLPALSSAELEQALAPFRGLIQQRPPQVSAVHVDGERAHARARRGEQMDLPERAITIHHLHLLNWCPEQGQLRVEVHCSAGTYIRSLARDLGQNLGCGGCLASLRRTQALGFQDAQAIPLPERPEPGATATDPPALPLLPPQDALAHLPQRRLSAREQEDWSCGRRITPGADQESDAVVVLSEGGRMLGLGVPDGTGGLQPKVVFEARG.

The active-site Nucleophile is the Asp-41.

Belongs to the pseudouridine synthase TruB family. Type 1 subfamily.

The enzyme catalyses uridine(55) in tRNA = pseudouridine(55) in tRNA. Its function is as follows. Responsible for synthesis of pseudouridine from uracil-55 in the psi GC loop of transfer RNAs. This Synechococcus sp. (strain WH7803) protein is tRNA pseudouridine synthase B.